A 105-amino-acid polypeptide reads, in one-letter code: Nucleoid-associated protein Ccur92_18190 (105 aa).

Belongs to the YbaB/EbfC family. In terms of assembly, homodimer.

The protein localises to the cytoplasm. It localises to the nucleoid. Its function is as follows. Binds to DNA and alters its conformation. May be involved in regulation of gene expression, nucleoid organization and DNA protection. This chain is Nucleoid-associated protein Ccur92_18190, found in Campylobacter curvus (strain 525.92).